The sequence spans 283 residues: ATP phosphoribosyltransferase (283 aa).

The protein belongs to the ATP phosphoribosyltransferase family. Long subfamily. It depends on Mg(2+) as a cofactor.

The protein resides in the cytoplasm. The catalysed reaction is 1-(5-phospho-beta-D-ribosyl)-ATP + diphosphate = 5-phospho-alpha-D-ribose 1-diphosphate + ATP. The protein operates within amino-acid biosynthesis; L-histidine biosynthesis; L-histidine from 5-phospho-alpha-D-ribose 1-diphosphate: step 1/9. Its activity is regulated as follows. Feedback inhibited by histidine. Functionally, catalyzes the condensation of ATP and 5-phosphoribose 1-diphosphate to form N'-(5'-phosphoribosyl)-ATP (PR-ATP). Has a crucial role in the pathway because the rate of histidine biosynthesis seems to be controlled primarily by regulation of HisG enzymatic activity. This chain is ATP phosphoribosyltransferase, found in Parabacteroides distasonis (strain ATCC 8503 / DSM 20701 / CIP 104284 / JCM 5825 / NCTC 11152).